A 484-amino-acid chain; its full sequence is Deoxyribodipyrimidine photo-lyase (484 aa).

The 130-residue stretch at 3–132 (APILFWHRRD…RAVQLWDQLL (130 aa)) folds into the Photolyase/cryptochrome alpha/beta domain. Residues 36–38 (CLD), Arg-51, and 101–109 (DIEPYGRDR) each bind coenzyme F420-(gamma-Glu)n. The DNA-binding stretch occupies residues 141 to 148 (GSGNPYSV). Residue Tyr-228 coordinates FAD. A DNA-binding site is contributed by Arg-232. An FAD-binding site is contributed by 240-247 (TSGLSPAL). Lys-248 is a coenzyme F420-(gamma-Glu)n binding site. 2 interaction with DNA regions span residues 283–290 (ELAWREFY) and 349–350 (NR). FAD contacts are provided by residues 346–352 (WMHNRCW), 380–382 (DGD), and Asn-386. Positions 411 and 472 each coordinate DNA.

Belongs to the DNA photolyase class-1 family. Monomer. Requires FAD as cofactor. It depends on coenzyme F420-(gamma-Glu)n as a cofactor.

The catalysed reaction is cyclobutadipyrimidine (in DNA) = 2 pyrimidine residues (in DNA).. Functionally, involved in repair of UV radiation-induced DNA damage. Catalyzes the light-dependent monomerization (300-600 nm) of cyclobutyl pyrimidine dimers (in cis-syn configuration), which are formed between adjacent bases on the same DNA strand upon exposure to ultraviolet radiation. This is Deoxyribodipyrimidine photo-lyase (phr) from Synechococcus sp. (strain ATCC 27144 / PCC 6301 / SAUG 1402/1) (Anacystis nidulans).